A 364-amino-acid polypeptide reads, in one-letter code: Succinyl-diaminopimelate desuccinylase (364 aa).

His64 contributes to the Zn(2+) binding site. Asp66 is an active-site residue. Asp95 is a Zn(2+) binding site. Glu125 functions as the Proton acceptor in the catalytic mechanism. Zn(2+) contacts are provided by Glu126, Glu154, and His339.

Belongs to the peptidase M20A family. DapE subfamily. In terms of assembly, homodimer. It depends on Zn(2+) as a cofactor. Co(2+) is required as a cofactor.

The catalysed reaction is N-succinyl-(2S,6S)-2,6-diaminopimelate + H2O = (2S,6S)-2,6-diaminopimelate + succinate. Its pathway is amino-acid biosynthesis; L-lysine biosynthesis via DAP pathway; LL-2,6-diaminopimelate from (S)-tetrahydrodipicolinate (succinylase route): step 3/3. Its function is as follows. Catalyzes the hydrolysis of N-succinyl-L,L-diaminopimelic acid (SDAP), forming succinate and LL-2,6-diaminopimelate (DAP), an intermediate involved in the bacterial biosynthesis of lysine and meso-diaminopimelic acid, an essential component of bacterial cell walls. This chain is Succinyl-diaminopimelate desuccinylase, found in Nitratiruptor sp. (strain SB155-2).